We begin with the raw amino-acid sequence, 481 residues long: Sulfate adenylyltransferase subunit 1 (481 aa).

A tr-type G domain is found at 22 to 236 (KDLLRFITCG…LLDSIRLDAD (215 aa)). Positions 31-38 (GSVDDGKS) are G1. 31–38 (GSVDDGKS) is a GTP binding site. The G2 stretch occupies residues 89–93 (GITID). The interval 110 to 113 (DCPG) is G3. Residues 110–114 (DCPGH) and 165–168 (NKMD) each bind GTP. The interval 165–168 (NKMD) is G4. The interval 202-204 (SAL) is G5.

This sequence belongs to the TRAFAC class translation factor GTPase superfamily. Classic translation factor GTPase family. CysN/NodQ subfamily. As to quaternary structure, heterodimer composed of CysD, the smaller subunit, and CysN.

The enzyme catalyses sulfate + ATP + H(+) = adenosine 5'-phosphosulfate + diphosphate. It participates in sulfur metabolism; hydrogen sulfide biosynthesis; sulfite from sulfate: step 1/3. Its function is as follows. With CysD forms the ATP sulfurylase (ATPS) that catalyzes the adenylation of sulfate producing adenosine 5'-phosphosulfate (APS) and diphosphate, the first enzymatic step in sulfur assimilation pathway. APS synthesis involves the formation of a high-energy phosphoric-sulfuric acid anhydride bond driven by GTP hydrolysis by CysN coupled to ATP hydrolysis by CysD. The protein is Sulfate adenylyltransferase subunit 1 of Laribacter hongkongensis (strain HLHK9).